Reading from the N-terminus, the 147-residue chain is Ubiquitin-conjugating enzyme E2 D2 (147 aa).

Positions 1–147 (MALKRIHKEL…SREWTQKYAM (147 aa)) constitute a UBC core domain. The active-site Glycyl thioester intermediate is Cys-85.

The protein belongs to the ubiquitin-conjugating enzyme family. Interacts with SCF (SKP1-CUL1-F-box protein) E3 ubiquitin ligase complex. Interacts with CNOT4 (via RING domain). Interacts with E3 ubiquitin-protein ligases CBLC, PJA1 and PJA2. Interacts with PDZRN3. Interacts with PPP1R11. Interacts with E3 ubiquitin-protein ligase PHF7; the interaction inhibits cleavage of PHF7 and promotes association of the complex with the nucleosome core particle.

It catalyses the reaction S-ubiquitinyl-[E1 ubiquitin-activating enzyme]-L-cysteine + [E2 ubiquitin-conjugating enzyme]-L-cysteine = [E1 ubiquitin-activating enzyme]-L-cysteine + S-ubiquitinyl-[E2 ubiquitin-conjugating enzyme]-L-cysteine.. It carries out the reaction S-ubiquitinyl-[E1 ubiquitin-activating enzyme]-L-cysteine + [acceptor protein]-L-lysine = [E1 ubiquitin-activating enzyme]-L-cysteine + N(6)-monoubiquitinyl-[acceptor protein]-L-lysine.. It participates in protein modification; protein ubiquitination. Its function is as follows. Accepts ubiquitin from the E1 complex and catalyzes its covalent attachment to other proteins. In vitro catalyzes 'Lys-48'-linked polyubiquitination. Mediates the selective degradation of short-lived and abnormal proteins. Functions in the E6/E6-AP-induced ubiquitination of p53/TP53. Mediates ubiquitination of PEX5 and SQSTM1 and autoubiquitination of STUB1 and TRAF6. Involved in the signal-induced conjugation and subsequent degradation of NFKBIA, FBXW2-mediated GCM1 ubiquitination and degradation, MDM2-dependent degradation of p53/TP53 and the activation of MAVS in the mitochondria by RIGI in response to viral infection. Essential for viral activation of IRF3. This is Ubiquitin-conjugating enzyme E2 D2 (UBE2D2) from Sus scrofa (Pig).